Reading from the N-terminus, the 857-residue chain is Facilitated trehalose transporter Tret1-1 (857 aa).

2 disordered regions span residues 1–28 and 62–203; these read MSGR…KLKE and DPFL…KATS. Topologically, residues 1–392 are cytoplasmic; the sequence is MSGRDSRGAG…VYRPTTNPIY (392 aa). Residues 69–81 show a composition bias toward polar residues; the sequence is VSPQRHPQNTVRT. Positions 134–143 are enriched in basic and acidic residues; sequence EIREHRDRQQ. Over residues 171–181 the composition is skewed to polar residues; it reads GNSNTNSNKAA. Phosphoserine occurs at positions 248, 249, 250, 320, and 322. Positions 327-346 are disordered; the sequence is LTSRQHFQQQRSISTDSRKS. The segment covering 330–341 has biased composition (polar residues); that stretch reads RQHFQQQRSIST. Residues 393 to 413 form a helical membrane-spanning segment; it reads IWTQVLAALSVSLGSLVVGFV. The Extracellular portion of the chain corresponds to 414–440; sequence SAYTSPALVSMTDRNITSFEVTQDAGS. N428 carries an N-linked (GlcNAc...) asparagine glycan. The chain crosses the membrane as a helical span at residues 441 to 461; it reads WVGGIMPLAGLAGGIAGGPLI. The Cytoplasmic portion of the chain corresponds to 462-473; the sequence is EYLGRRNTILAT. The chain crosses the membrane as a helical span at residues 474–494; that stretch reads AVPFIVSSLLIACAVNVAMVL. Residues 495 to 497 are Extracellular-facing; sequence CGR. A helical membrane pass occupies residues 498–518; the sequence is FLAGFCVGIASLSLPVYLGET. Over 519–528 the chain is Cytoplasmic; it reads VQPEVRGTLG. The chain crosses the membrane as a helical span at residues 529-549; it reads LLPTAFGNIGILLCFVAGSFM. N-linked (GlcNAc...) asparagine glycosylation occurs at N550. Residues 550–552 are Extracellular-facing; sequence NWS. Residues 553–573 form a helical membrane-spanning segment; the sequence is MLAFLGAALPVPFLILMFLIP. The Cytoplasmic portion of the chain corresponds to 574 to 636; the sequence is ETPRWFVGRG…ELFKRINLKP (63 aa). The helical transmembrane segment at 637 to 657 threads the bilayer; the sequence is LSISLGLMFFQQFSGINAVIF. Topologically, residues 658-673 are extracellular; that stretch reads YTVQIFKDAGSTIDSN. Residues 674–694 traverse the membrane as a helical segment; that stretch reads LCTIIVGIVNFFATFMGILLI. At 695 to 700 the chain is on the cytoplasmic side; the sequence is DRLGRK. Residues 701-721 traverse the membrane as a helical segment; the sequence is ILLYISDIAMILTLSILGGFF. The Extracellular portion of the chain corresponds to 722–740; sequence YCKAHGPDVSHLGWLPLTC. A helical transmembrane segment spans residues 741 to 761; sequence FVIYILGFSLGFGPIPWLMMG. At 762 to 770 the chain is on the cytoplasmic side; that stretch reads EILPAKIRG. Residues 771 to 791 form a helical membrane-spanning segment; the sequence is PAASVVTAFNWFCTFVVTKTF. Residues 792 to 801 are Extracellular-facing; the sequence is QDLTGAMGAH. The helical transmembrane segment at 802–822 threads the bilayer; that stretch reads GAFWLFGAICFVGLFFVIIYV. At 823–857 the chain is on the cytoplasmic side; the sequence is PETQGKTLEDIERKMMGRVRRMSSVANIKPLSFNM. S845 and S846 each carry phosphoserine.

This sequence belongs to the major facilitator superfamily. Sugar transporter (TC 2.A.1.1) family. Trehalose transporter subfamily.

The protein resides in the cell membrane. Functionally, low-capacity facilitative transporter for trehalose. Does not transport maltose, sucrose or lactose. Mediates the bidirectional transfer of trehalose. Responsible for the transport of trehalose synthesized in the fat body and the incorporation of trehalose into other tissues that require a carbon source, thereby regulating trehalose levels in the hemolymph. This is Facilitated trehalose transporter Tret1-1 from Drosophila simulans (Fruit fly).